The chain runs to 122 residues: Large ribosomal subunit protein uL29 (122 aa).

The residue at position 12 (Ser-12) is a Phosphoserine.

It belongs to the universal ribosomal protein uL29 family. Component of the large ribosomal subunit (LSU). Mature yeast ribosomes consist of a small (40S) and a large (60S) subunit. The 40S small subunit contains 1 molecule of ribosomal RNA (18S rRNA) and at least 33 different proteins. The large 60S subunit contains 3 rRNA molecules (25S, 5.8S and 5S rRNA) and at least 46 different proteins. uL29 is associated with the polypeptide exit tunnel.

Its subcellular location is the cytoplasm. The protein localises to the nucleus. The protein resides in the nucleolus. In terms of biological role, component of the ribosome, a large ribonucleoprotein complex responsible for the synthesis of proteins in the cell. The small ribosomal subunit (SSU) binds messenger RNAs (mRNAs) and translates the encoded message by selecting cognate aminoacyl-transfer RNA (tRNA) molecules. The large subunit (LSU) contains the ribosomal catalytic site termed the peptidyl transferase center (PTC), which catalyzes the formation of peptide bonds, thereby polymerizing the amino acids delivered by tRNAs into a polypeptide chain. The nascent polypeptides leave the ribosome through a tunnel in the LSU and interact with protein factors that function in enzymatic processing, targeting, and the membrane insertion of nascent chains at the exit of the ribosomal tunnel. The sequence is that of Large ribosomal subunit protein uL29 (rpl35) from Schizosaccharomyces pombe (strain 972 / ATCC 24843) (Fission yeast).